We begin with the raw amino-acid sequence, 243 residues long: Venom peptide isomerase heavy chain (243 aa).

The Peptidase S1 domain maps to 1–243 (IVGGKTAKFG…YTNWMSKNMV (243 aa)). Cysteines 31 and 47 form a disulfide. Active-site charge relay system residues include histidine 46 and aspartate 96. The N-linked (GlcNAc...) asparagine glycan is linked to asparagine 127. 2 cysteine pairs are disulfide-bonded: cysteine 159/cysteine 181 and cysteine 190/cysteine 219. Serine 194 functions as the Charge relay system in the catalytic mechanism.

Belongs to the peptidase S1 family. In terms of assembly, heterodimer with venom peptide isomerase light chain; disulfide-linked. Post-translationally, N-linked glycan at Asn-127 consists of Man3-GlcNAc2-Fuc. In terms of tissue distribution, expressed by the venom gland.

Its subcellular location is the secreted. Peptide isomerase that inverts the chirality at the Ser-81 of omega-Aga IVB. Acts cofactor-independently. The sequence is that of Venom peptide isomerase heavy chain from Agelenopsis aperta (North American funnel-web spider).